The following is a 204-amino-acid chain: MLRIAIAKGRLMDSLINYLDAIEFTTLSETLKNRERQLLLSVDNIECILVKGSDVPIYVEQGIADIGIVGSDILDERHYNVNNLLNMPFGACHFAVAAKPETTNYRKIATSYVHTAETYFKSKGIDVELIKLNGSVELACVVDMVDGIVDIVQTGTTLKANGLVEKQHISDINARLITNKAAYFKKSQLIEQFIRSLEVSIANA.

Belongs to the ATP phosphoribosyltransferase family. Short subfamily. As to quaternary structure, heteromultimer composed of HisG and HisZ subunits.

The protein resides in the cytoplasm. The enzyme catalyses 1-(5-phospho-beta-D-ribosyl)-ATP + diphosphate = 5-phospho-alpha-D-ribose 1-diphosphate + ATP. Its pathway is amino-acid biosynthesis; L-histidine biosynthesis; L-histidine from 5-phospho-alpha-D-ribose 1-diphosphate: step 1/9. Catalyzes the condensation of ATP and 5-phosphoribose 1-diphosphate to form N'-(5'-phosphoribosyl)-ATP (PR-ATP). Has a crucial role in the pathway because the rate of histidine biosynthesis seems to be controlled primarily by regulation of HisG enzymatic activity. This chain is ATP phosphoribosyltransferase, found in Staphylococcus aureus (strain MRSA252).